Here is a 400-residue protein sequence, read N- to C-terminus: Proline-rich protein 5 (400 aa).

Residues 301–358 (TDSTSKLSMAGTKPPGEGERPPISNGQFPPLHNLSDSQQGLYNSQRDSPLLPAPSSSP) form a disordered region. A compositionally biased stretch (polar residues) spans 334–347 (LSDSQQGLYNSQRD). Over residues 348–358 (SPLLPAPSSSP) the composition is skewed to low complexity.

It belongs to the PROTOR family. Associated component of the mechanistic target of rapamycin complex 2 (mTORC2).

In terms of biological role, associated subunit of mTORC2, which regulates cell growth and survival in response to hormonal signals. The protein is Proline-rich protein 5 (prr5) of Xenopus laevis (African clawed frog).